Consider the following 70-residue polypeptide: Translation initiation factor IF-1 (70 aa).

The S1-like domain occupies 1 to 70; the sequence is MKNDKLFLTG…LKLGRITQRK (70 aa).

This sequence belongs to the IF-1 family. As to quaternary structure, component of the 30S ribosomal translation pre-initiation complex which assembles on the 30S ribosome in the order IF-2 and IF-3, IF-1 and N-formylmethionyl-tRNA(fMet); mRNA recruitment can occur at any time during PIC assembly.

It localises to the cytoplasm. One of the essential components for the initiation of protein synthesis. Stabilizes the binding of IF-2 and IF-3 on the 30S subunit to which N-formylmethionyl-tRNA(fMet) subsequently binds. Helps modulate mRNA selection, yielding the 30S pre-initiation complex (PIC). Upon addition of the 50S ribosomal subunit IF-1, IF-2 and IF-3 are released leaving the mature 70S translation initiation complex. The sequence is that of Translation initiation factor IF-1 from Mycoplasma genitalium (strain ATCC 33530 / DSM 19775 / NCTC 10195 / G37) (Mycoplasmoides genitalium).